Reading from the N-terminus, the 512-residue chain is Polyamine aminopropyltransferase (512 aa).

The next 7 helical transmembrane spans lie at 19–39 (IVSI…SYIL), 48–68 (LTIS…EKFM), 76–96 (VWIE…MFGI), 108–128 (YLYS…PILI), 151–171 (AGGL…FGMV), 172–192 (KTAF…LWLF), and 199–219 (FIVH…GLFF). The PABS domain maps to 215 to 450 (AGLFFGEEMA…GNWGFVMASR (236 aa)). Positions 217–457 (LFFGEEMAFN…ASREEIDLDI (241 aa)) are spermidine synthase. Residue Q245 coordinates S-methyl-5'-thioadenosine. Residues H275 and D299 each coordinate spermidine. Residues D319 and 353–354 (DA) contribute to the S-methyl-5'-thioadenosine site. The active-site Proton acceptor is the D371.

This sequence belongs to the spermidine/spermine synthase family. Homodimer or homotetramer.

The protein localises to the cell membrane. It catalyses the reaction S-adenosyl 3-(methylsulfanyl)propylamine + putrescine = S-methyl-5'-thioadenosine + spermidine + H(+). It participates in amine and polyamine biosynthesis; spermidine biosynthesis; spermidine from putrescine: step 1/1. Its function is as follows. Catalyzes the irreversible transfer of a propylamine group from the amino donor S-adenosylmethioninamine (decarboxy-AdoMet) to putrescine (1,4-diaminobutane) to yield spermidine. This is Polyamine aminopropyltransferase from Oceanobacillus iheyensis (strain DSM 14371 / CIP 107618 / JCM 11309 / KCTC 3954 / HTE831).